The primary structure comprises 183 residues: Peptidyl-tRNA hydrolase (183 aa).

Y14 provides a ligand contact to tRNA. The active-site Proton acceptor is the H19. Positions 61, 63, and 109 each coordinate tRNA.

It belongs to the PTH family. As to quaternary structure, monomer.

The protein resides in the cytoplasm. It catalyses the reaction an N-acyl-L-alpha-aminoacyl-tRNA + H2O = an N-acyl-L-amino acid + a tRNA + H(+). In terms of biological role, hydrolyzes ribosome-free peptidyl-tRNAs (with 1 or more amino acids incorporated), which drop off the ribosome during protein synthesis, or as a result of ribosome stalling. Catalyzes the release of premature peptidyl moieties from peptidyl-tRNA molecules trapped in stalled 50S ribosomal subunits, and thus maintains levels of free tRNAs and 50S ribosomes. The chain is Peptidyl-tRNA hydrolase from Aliarcobacter butzleri (strain RM4018) (Arcobacter butzleri).